A 276-amino-acid chain; its full sequence is NADPH-dependent 7-cyano-7-deazaguanine reductase (276 aa).

Residue 83–85 (IES) coordinates substrate. 85–86 (SK) is an NADPH binding site. Catalysis depends on cysteine 184, which acts as the Thioimide intermediate. Aspartate 191 (proton donor) is an active-site residue. Substrate is bound at residue 223-224 (HE). 252–253 (RG) serves as a coordination point for NADPH.

The protein belongs to the GTP cyclohydrolase I family. QueF type 2 subfamily. In terms of assembly, homodimer.

The protein localises to the cytoplasm. It carries out the reaction 7-aminomethyl-7-carbaguanine + 2 NADP(+) = 7-cyano-7-deazaguanine + 2 NADPH + 3 H(+). The protein operates within tRNA modification; tRNA-queuosine biosynthesis. In terms of biological role, catalyzes the NADPH-dependent reduction of 7-cyano-7-deazaguanine (preQ0) to 7-aminomethyl-7-deazaguanine (preQ1). This chain is NADPH-dependent 7-cyano-7-deazaguanine reductase, found in Pseudomonas aeruginosa (strain LESB58).